A 92-amino-acid chain; its full sequence is Small ribosomal subunit protein uS19c (92 aa).

It belongs to the universal ribosomal protein uS19 family.

It localises to the plastid. The protein resides in the chloroplast. In terms of biological role, protein S19 forms a complex with S13 that binds strongly to the 16S ribosomal RNA. The chain is Small ribosomal subunit protein uS19c from Coffea arabica (Arabian coffee).